We begin with the raw amino-acid sequence, 135 residues long: Transcription antitermination protein NusB (135 aa).

This sequence belongs to the NusB family.

Involved in transcription antitermination. Required for transcription of ribosomal RNA (rRNA) genes. Binds specifically to the boxA antiterminator sequence of the ribosomal RNA (rrn) operons. This chain is Transcription antitermination protein NusB, found in Shewanella piezotolerans (strain WP3 / JCM 13877).